A 325-amino-acid chain; its full sequence is Tetraacyldisaccharide 4'-kinase (325 aa).

54–61 (SVGGTGKT) lines the ATP pocket.

The protein belongs to the LpxK family.

It carries out the reaction a lipid A disaccharide + ATP = a lipid IVA + ADP + H(+). Its pathway is glycolipid biosynthesis; lipid IV(A) biosynthesis; lipid IV(A) from (3R)-3-hydroxytetradecanoyl-[acyl-carrier-protein] and UDP-N-acetyl-alpha-D-glucosamine: step 6/6. In terms of biological role, transfers the gamma-phosphate of ATP to the 4'-position of a tetraacyldisaccharide 1-phosphate intermediate (termed DS-1-P) to form tetraacyldisaccharide 1,4'-bis-phosphate (lipid IVA). The polypeptide is Tetraacyldisaccharide 4'-kinase (Rickettsia akari (strain Hartford)).